An 89-amino-acid polypeptide reads, in one-letter code: Small ribosomal subunit protein uS15 (89 aa).

This sequence belongs to the universal ribosomal protein uS15 family. Part of the 30S ribosomal subunit. Forms a bridge to the 50S subunit in the 70S ribosome, contacting the 23S rRNA.

In terms of biological role, one of the primary rRNA binding proteins, it binds directly to 16S rRNA where it helps nucleate assembly of the platform of the 30S subunit by binding and bridging several RNA helices of the 16S rRNA. Functionally, forms an intersubunit bridge (bridge B4) with the 23S rRNA of the 50S subunit in the ribosome. The polypeptide is Small ribosomal subunit protein uS15 (Kocuria rhizophila (strain ATCC 9341 / DSM 348 / NBRC 103217 / DC2201)).